A 212-amino-acid chain; its full sequence is uncharacterized protein (212 aa).

The protein belongs to the mimivirus R683/R861 family.

This is an uncharacterized protein from Acanthamoeba polyphaga (Amoeba).